The chain runs to 441 residues: Chitinase-like protein Idgf3 (441 aa).

The signal sequence occupies residues 1 to 23 (MSGSLWLSLALSLAVLAQFKVSA). Residues 25 to 441 (PNLVCFYDSQ…MLRAIKYRLL (417 aa)) enclose the GH18 domain. Cysteines 29 and 56 form a disulfide. Asn221 is a glycosylation site (N-linked (GlcNAc...) asparagine). A disordered region spans residues 310–331 (GDSGMPVVSSTQGPAPAGPQSK). A disulfide bridge connects residues Cys342 and Cys425.

The protein belongs to the glycosyl hydrolase 18 family. IDGF subfamily. Glycosylated.

It localises to the secreted. Functionally, cooperates with insulin-like peptides to stimulate the proliferation, polarization and motility of imaginal disk cells. May act by stabilizing the binding of insulin-like peptides to its receptor through a simultaneous interaction with both molecules to form a multiprotein signaling complex. In Drosophila simulans (Fruit fly), this protein is Chitinase-like protein Idgf3 (Idgf3).